The following is a 154-amino-acid chain: SsrA-binding protein (154 aa).

Belongs to the SmpB family.

Its subcellular location is the cytoplasm. Required for rescue of stalled ribosomes mediated by trans-translation. Binds to transfer-messenger RNA (tmRNA), required for stable association of tmRNA with ribosomes. tmRNA and SmpB together mimic tRNA shape, replacing the anticodon stem-loop with SmpB. tmRNA is encoded by the ssrA gene; the 2 termini fold to resemble tRNA(Ala) and it encodes a 'tag peptide', a short internal open reading frame. During trans-translation Ala-aminoacylated tmRNA acts like a tRNA, entering the A-site of stalled ribosomes, displacing the stalled mRNA. The ribosome then switches to translate the ORF on the tmRNA; the nascent peptide is terminated with the 'tag peptide' encoded by the tmRNA and targeted for degradation. The ribosome is freed to recommence translation, which seems to be the essential function of trans-translation. This is SsrA-binding protein from Ruminiclostridium cellulolyticum (strain ATCC 35319 / DSM 5812 / JCM 6584 / H10) (Clostridium cellulolyticum).